The chain runs to 432 residues: FAD-dependent monooxygenase pynG (432 aa).

The FAD site is built by glutamate 32, arginine 103, aspartate 315, and alanine 328.

This sequence belongs to the paxM FAD-dependent monooxygenase family. Requires FAD as cofactor.

It participates in secondary metabolite biosynthesis. Its function is as follows. FAD-dependent monooxygenase; part of the gene cluster that mediates the biosynthesis of pyranonigrins, a family of antioxidative compounds. The first step of pyranonigrins biosynthesis is performed by the hybrid PKS-NRPS synthetase that condenses 6 malonyl-CoA units to an acetyl starter unit, to form a 1,3,5-trioxotetradecane-6,8-dienyl-ACP. The enoyl reductase (ER) domain of pynA is likely to be functional during the first two rounds of polyketide chain extension, to generate the saturated C-C bonds of the alkyl side chain. PynA subsequently forms the amide bond between the acyl chain and L-serine. Although pynA has a terminal reductase domain, it appears to require the thioesterase pynI for the release of the straight-chain intermediate from pynA via the formation of a tetramic acid pyranonigrin J. The methyltransferase pynC then coverts pyranonigrin J to pyranonigrin I via N-methylation. The FAD-dependent monooxygenase pynG catalyzes an epoxidation-mediated cyclization to form the dihydro-gamma-pyrone moiety, followed by pynD-catalyzed oxidation of the alcohol to the ketone and enolization to yield the characteristic tetramic acid-fused gamma-pyrone core of pyranonigrin H. Pyranonigrin H is substrate of pynH for dehydration-mediated exo-methylene formation from the serine side chain to produce pyranonigrin E, before the oxidase pynE reduces the exo-methylene of pyranonigrin E into a pendant methyl to form pyranonigrin G. The FAD-linked oxidoreductase pynB performs the reverse reaction and converts pyranonigrin G back to pyranonigrin E. This Aspergillus niger (strain ATCC MYA-4892 / CBS 513.88 / FGSC A1513) protein is FAD-dependent monooxygenase pynG.